We begin with the raw amino-acid sequence, 154 residues long: Nuclear cap-binding protein subunit 2 (154 aa).

Residues tyrosine 10, tyrosine 33, 102 to 106 (RVDWD), 113 to 117 (RQYGR), and 123 to 124 (QV) each bind mRNA. In terms of domain architecture, RRM spans 30 to 108 (CTLYVGNLSF…RLIRVDWDAG (79 aa)).

Belongs to the RRM NCBP2 family. Component of the nuclear cap-binding complex (CBC), a heterodimer composed of Cbp80 and Cbp20 that interacts with m7GpppG-capped RNA. Interacts with Ars2.

The protein resides in the nucleus. Component of the cap-binding complex (CBC), which binds co-transcriptionally to the 5' cap of pre-mRNAs and is involved in various processes such as pre-mRNA splicing and RNA-mediated gene silencing (RNAi). The CBC complex is involved in miRNA-mediated RNA interference via its interaction with Ars2 and is required for primary microRNAs (miRNAs) processing. Also involved in innate immunity via the short interfering RNAs (siRNAs) processing machinery by restricting the viral RNA production. In the CBC complex, Cbp20 recognizes and binds capped RNAs (m7GpppG-capped RNA) but requires Cbp80 to stabilize the movement of its N-terminal loop and lock the CBC into a high affinity cap-binding state with the cap structure. The sequence is that of Nuclear cap-binding protein subunit 2 (Cbp20) from Drosophila persimilis (Fruit fly).